A 77-amino-acid polypeptide reads, in one-letter code: Putative snRNP Sm-like protein (77 aa).

One can recognise a Sm domain in the interval Arg4 to Gly76.

This sequence belongs to the snRNP Sm proteins family.

In Archaeoglobus fulgidus (strain ATCC 49558 / DSM 4304 / JCM 9628 / NBRC 100126 / VC-16), this protein is Putative snRNP Sm-like protein.